The sequence spans 333 residues: uncharacterized protein (333 aa).

Belongs to the polysaccharide synthase family.

This is an uncharacterized protein from Methanocaldococcus jannaschii (strain ATCC 43067 / DSM 2661 / JAL-1 / JCM 10045 / NBRC 100440) (Methanococcus jannaschii).